The primary structure comprises 460 residues: Argininosuccinate lyase (460 aa).

The protein belongs to the lyase 1 family. Argininosuccinate lyase subfamily.

The protein resides in the cytoplasm. It catalyses the reaction 2-(N(omega)-L-arginino)succinate = fumarate + L-arginine. It functions in the pathway amino-acid biosynthesis; L-arginine biosynthesis; L-arginine from L-ornithine and carbamoyl phosphate: step 3/3. This Parvibaculum lavamentivorans (strain DS-1 / DSM 13023 / NCIMB 13966) protein is Argininosuccinate lyase.